The primary structure comprises 2531 residues: Putative neurobeachin homolog (2531 aa).

Composition is skewed to acidic residues over residues 1-10, 26-35, and 62-74; these read MDISETEYND, EDEVNDEESN, and EPSD…EESE. Disordered regions lie at residues 1 to 101, 1363 to 1398, 1420 to 1440, and 1642 to 1670; these read MDIS…SPPP, NDGD…DNGG, EELK…MPPQ, and RFVP…EISE. Basic and acidic residues predominate over residues 1363–1379; the sequence is NDGDHASIKNGSDHSEN. Positions 1427–1440 are enriched in polar residues; it reads QSNGRRPSTLMPPQ. Basic and acidic residues predominate over residues 1650 to 1670; the sequence is SRHEEANLPEGEKNEEPEISE. The region spanning 1714–1822 is the BEACH-type PH domain; the sequence is PSSQSACFST…TVRKVVYQLP (109 aa). A BEACH domain is found at 1841–2130; it reads MTPRQLFKHS…QLLAEAHPPR (290 aa). WD repeat units lie at residues 2289 to 2332, 2350 to 2389, 2429 to 2468, and 2471 to 2510; these read GHGD…GFIA, GHEA…LRRI, LSEE…KLYT, and PLNS…WHYE.

Belongs to the WD repeat neurobeachin family. Interacts with RII subunit of PKA.

It is found in the cytoplasm. Its subcellular location is the membrane. The protein resides in the nucleus. Functionally, binds to type II regulatory subunits of protein kinase A and anchors/targets them to the membrane. May anchor the kinase to cytoskeletal and/or organelle-associated proteins. Regulates endosomal traffic in polarized epithelial cells such as the vulval precursor cells and intestinal cells. Thought to act as a negative regulator of lin-12 activity in vulval precursor cells. May have a role in the internalization process from basolateral surface of polarized epithelial cells. In Caenorhabditis briggsae, this protein is Putative neurobeachin homolog.